Reading from the N-terminus, the 760-residue chain is Amyloid beta precursor protein binding family B member 2 (760 aa).

Phosphoserine occurs at positions 123 and 160. Disordered stretches follow at residues 177 to 295 (QNLG…LPPG) and 324 to 351 (PADL…KQPW). 2 stretches are compositionally biased toward polar residues: residues 212–230 (NKPQ…SSSP) and 261–275 (SWTT…PSSP). Positions 290–322 (PDLPPGWKRVNDIAGTYYWHIPTGTTQWERPVS) constitute a WW domain. Phosphoserine occurs at positions 334, 409, and 412. 2 PID domains span residues 413–580 (DPEA…LQVD) and 586–738 (TELV…VTTN).

As to quaternary structure, interacts (via C-terminus) with APP (via C-terminus). Interacts with APLP2 (via cytoplasmic domain). Expressed in the brain, retinal lens and muscle cells (at protein level).

Its subcellular location is the endoplasmic reticulum. The protein resides in the golgi apparatus. The protein localises to the early endosome. Plays a role in the maintenance of lens transparency, and may also play a role in muscle cell strength. Involved in hippocampal neurite branching and neuromuscular junction formation, as a result plays a role in spatial memory functioning. Activates transcription of APP. This chain is Amyloid beta precursor protein binding family B member 2, found in Mus musculus (Mouse).